Reading from the N-terminus, the 259-residue chain is Probable ABC transporter permease protein RC0129 (259 aa).

Helical transmembrane passes span 13–35 (TVKF…SSII), 49–69 (LFIG…SGAV), 148–168 (VITA…IGVM), 195–215 (PIDV…ISII), and 237–257 (AVVN…ELFF).

This sequence belongs to the MlaE permease family.

The protein resides in the cell inner membrane. Could be part of an ABC transporter complex. This chain is Probable ABC transporter permease protein RC0129, found in Rickettsia conorii (strain ATCC VR-613 / Malish 7).